The chain runs to 65 residues: Large ribosomal subunit protein uL29 (65 aa).

Belongs to the universal ribosomal protein uL29 family.

This is Large ribosomal subunit protein uL29 from Lactobacillus johnsonii (strain CNCM I-12250 / La1 / NCC 533).